We begin with the raw amino-acid sequence, 835 residues long: Prickle-like protein 1-A (835 aa).

The 109-residue stretch at 14–122 (FGCQRSSTSD…NIKMLSRAVM (109 aa)) folds into the PET domain. 3 consecutive LIM zinc-binding domains span residues 124-188 (ATCE…ELLK), 189-249 (PRCS…HYAE), and 250-313 (YCES…EDVH). 4 disordered regions span residues 312 to 346 (VHAS…ADQC), 426 to 455 (LFQQ…QRNN), 603 to 706 (CQEK…RKRS), and 769 to 835 (CSSS…CIIS). Basic and acidic residues-rich tracts occupy residues 432 to 453 (EDNR…DLQR), 603 to 614 (CQEKPPPEEKPM), and 646 to 655 (EIRRPPMSER). 2 stretches are compositionally biased toward basic residues: residues 669–683 (RPHH…KSRK) and 819–835 (SKSK…CIIS). Position 832 is a cysteine methyl ester (cysteine 832). Residue cysteine 832 is the site of S-farnesyl cysteine attachment. Residues 833 to 835 (IIS) constitute a propeptide, removed in mature form.

This sequence belongs to the prickle / espinas / testin family. As to quaternary structure, interacts with dvl2/dsh and mapk8/jnk1. Expressed in the dorsal marginal zone of early gastrulae (stage 10). As gastrulation proceeds, expression expands to include the lateral and ventral marginal zones, excluding the few rows of cells above the blastopore lip. Expression moves dorsally with gastrulation cell movements, and by the end of gastrulation expression is seen in dorsal mesoderm and posterior but not anterior neural ectoderm. Expression becomes down-regulated in mesoderm but remains strong in posterior ectoderm through the neurula stages. During tailbud stages, expressed in the pronephric duct, tailbud, tailtip and forming somites. In the most posterior regions, expressed in notochord and in the floorplate of the neural tube with weak expression in the roofplate. At stage 30, expressed in a complex pattern in the head including strong expression in the lens and otic vesicle.

It is found in the cell membrane. Functionally, acts in a planar cell polarity (PCP) complex; polarization along the apical/basal axis of epithelial cells. Regulates the polarized assembly of fibronectrin on the surface of the mesoderm during gastrulation. Essential for gastrulation cell movements, cooperating with dvl2/dsh to activate jnk. Acts together with tes to control axial elongation. The polypeptide is Prickle-like protein 1-A (prickle1-a) (Xenopus laevis (African clawed frog)).